The primary structure comprises 601 residues: DNA ligase (601 aa).

Position 258 (Asp-258) interacts with ATP. The N6-AMP-lysine intermediate role is filled by Lys-260. Positions 265, 280, 310, 350, 427, and 433 each coordinate ATP. Residues 568 to 601 (DKSPEDATTTDEILEMYNKQPKKKIESPPIDESV) are disordered.

This sequence belongs to the ATP-dependent DNA ligase family. Requires Mg(2+) as cofactor.

The enzyme catalyses ATP + (deoxyribonucleotide)n-3'-hydroxyl + 5'-phospho-(deoxyribonucleotide)m = (deoxyribonucleotide)n+m + AMP + diphosphate.. DNA ligase that seals nicks in double-stranded DNA during DNA replication, DNA recombination and DNA repair. This Saccharolobus islandicus (strain Y.G.57.14 / Yellowstone #1) (Sulfolobus islandicus) protein is DNA ligase.